A 251-amino-acid chain; its full sequence is Maleate isomerase (251 aa).

Substrate contacts are provided by residues N15, 81–83 (CLV), Y138, and N168. The Nucleophile role is filled by C81. Position 81 is an S-(2-succinyl)cysteine (C81). C199 (proton donor) is an active-site residue. 200–201 (VQ) contacts substrate.

The protein belongs to the maleate isomerase family. In terms of assembly, homodimer.

It catalyses the reaction maleate = fumarate. Functionally, catalyzes cis-trans isomerization of the C2-C3 double bond in maleate to yield fumarate. The sequence is that of Maleate isomerase from Geobacillus stearothermophilus (Bacillus stearothermophilus).